Consider the following 125-residue polypeptide: Fluoride-specific ion channel FluC (125 aa).

4 consecutive transmembrane segments (helical) span residues 5 to 25 (IFLV…VSLL), 33 to 53 (IFPL…GILV), 66 to 86 (VKIF…SFSL), and 100 to 120 (LVLY…LGYI). Residues Gly76 and Thr79 each contribute to the Na(+) site.

The protein belongs to the fluoride channel Fluc/FEX (TC 1.A.43) family.

It is found in the cell inner membrane. It carries out the reaction fluoride(in) = fluoride(out). Na(+) is not transported, but it plays an essential structural role and its presence is essential for fluoride channel function. Its function is as follows. Fluoride-specific ion channel. Important for reducing fluoride concentration in the cell, thus reducing its toxicity. This chain is Fluoride-specific ion channel FluC, found in Azobacteroides pseudotrichonymphae genomovar. CFP2.